The sequence spans 175 residues: Ribosome-binding factor A (175 aa).

Residues 129–175 (GAKPAGEADPYRDRGSADEPSDAGGLVIRTSDGLEAENTGDDYQAED) are disordered. The span at 162–175 (LEAENTGDDYQAED) shows a compositional bias: acidic residues.

It belongs to the RbfA family. As to quaternary structure, monomer. Binds 30S ribosomal subunits, but not 50S ribosomal subunits or 70S ribosomes.

Its subcellular location is the cytoplasm. One of several proteins that assist in the late maturation steps of the functional core of the 30S ribosomal subunit. Associates with free 30S ribosomal subunits (but not with 30S subunits that are part of 70S ribosomes or polysomes). Required for efficient processing of 16S rRNA. May interact with the 5'-terminal helix region of 16S rRNA. The protein is Ribosome-binding factor A of Mycobacterium marinum (strain ATCC BAA-535 / M).